The primary structure comprises 234 residues: Thiamine import ATP-binding protein ThiQ (234 aa).

Residues 2 to 230 (LRFSDVKYRY…EKPPELTQYL (229 aa)) form the ABC transporter domain. 32-39 (GPSGAGKS) serves as a coordination point for ATP.

The protein belongs to the ABC transporter superfamily. Thiamine importer (TC 3.A.1.19.1) family. In terms of assembly, the complex is composed of two ATP-binding proteins (ThiQ), two transmembrane proteins (ThiP) and a solute-binding protein (ThiB).

It localises to the cell inner membrane. The catalysed reaction is thiamine(out) + ATP + H2O = thiamine(in) + ADP + phosphate + H(+). Functionally, part of the ABC transporter complex ThiBPQ involved in thiamine import. Responsible for energy coupling to the transport system. The chain is Thiamine import ATP-binding protein ThiQ from Aliivibrio fischeri (strain ATCC 700601 / ES114) (Vibrio fischeri).